The sequence spans 497 residues: UDP-N-acetylmuramoyl-L-alanyl-D-glutamate--2,6-diaminopimelate ligase (497 aa).

Ser33 is a UDP-N-acetyl-alpha-D-muramoyl-L-alanyl-D-glutamate binding site. 119–125 provides a ligand contact to ATP; that stretch reads GTNGKTT. UDP-N-acetyl-alpha-D-muramoyl-L-alanyl-D-glutamate contacts are provided by residues 161–162, Ser188, Gln194, and Arg196; that span reads TT. An N6-carboxylysine modification is found at Lys228. Meso-2,6-diaminopimelate contacts are provided by residues Arg390, 414–417, Gly465, and Glu469; that span reads DNPR. The Meso-diaminopimelate recognition motif signature appears at 414–417; the sequence is DNPR.

It belongs to the MurCDEF family. MurE subfamily. Mg(2+) serves as cofactor. Post-translationally, carboxylation is probably crucial for Mg(2+) binding and, consequently, for the gamma-phosphate positioning of ATP.

Its subcellular location is the cytoplasm. The catalysed reaction is UDP-N-acetyl-alpha-D-muramoyl-L-alanyl-D-glutamate + meso-2,6-diaminopimelate + ATP = UDP-N-acetyl-alpha-D-muramoyl-L-alanyl-gamma-D-glutamyl-meso-2,6-diaminopimelate + ADP + phosphate + H(+). The protein operates within cell wall biogenesis; peptidoglycan biosynthesis. Functionally, catalyzes the addition of meso-diaminopimelic acid to the nucleotide precursor UDP-N-acetylmuramoyl-L-alanyl-D-glutamate (UMAG) in the biosynthesis of bacterial cell-wall peptidoglycan. This chain is UDP-N-acetylmuramoyl-L-alanyl-D-glutamate--2,6-diaminopimelate ligase, found in Synechococcus elongatus (strain ATCC 33912 / PCC 7942 / FACHB-805) (Anacystis nidulans R2).